Consider the following 209-residue polypeptide: Uracil phosphoribosyltransferase (209 aa).

Residues arginine 79, arginine 104, and aspartate 131 to serine 139 contribute to the 5-phospho-alpha-D-ribose 1-diphosphate site. Uracil-binding positions include valine 194 and glycine 199 to alanine 201. Aspartate 200 serves as a coordination point for 5-phospho-alpha-D-ribose 1-diphosphate.

Belongs to the UPRTase family. The cofactor is Mg(2+).

It catalyses the reaction UMP + diphosphate = 5-phospho-alpha-D-ribose 1-diphosphate + uracil. It functions in the pathway pyrimidine metabolism; UMP biosynthesis via salvage pathway; UMP from uracil: step 1/1. With respect to regulation, allosterically activated by GTP. In terms of biological role, catalyzes the conversion of uracil and 5-phospho-alpha-D-ribose 1-diphosphate (PRPP) to UMP and diphosphate. This Bacillus cytotoxicus (strain DSM 22905 / CIP 110041 / 391-98 / NVH 391-98) protein is Uracil phosphoribosyltransferase.